The chain runs to 84 residues: Small ribosomal subunit protein uS17 (84 aa).

The protein belongs to the universal ribosomal protein uS17 family. As to quaternary structure, part of the 30S ribosomal subunit.

Functionally, one of the primary rRNA binding proteins, it binds specifically to the 5'-end of 16S ribosomal RNA. The sequence is that of Small ribosomal subunit protein uS17 from Clostridium botulinum (strain Alaska E43 / Type E3).